Here is a 282-residue protein sequence, read N- to C-terminus: ATP phosphoribosyltransferase (282 aa).

It belongs to the ATP phosphoribosyltransferase family. Long subfamily. The cofactor is Mg(2+).

Its subcellular location is the cytoplasm. The enzyme catalyses 1-(5-phospho-beta-D-ribosyl)-ATP + diphosphate = 5-phospho-alpha-D-ribose 1-diphosphate + ATP. Its pathway is amino-acid biosynthesis; L-histidine biosynthesis; L-histidine from 5-phospho-alpha-D-ribose 1-diphosphate: step 1/9. Its activity is regulated as follows. Feedback inhibited by histidine. In terms of biological role, catalyzes the condensation of ATP and 5-phosphoribose 1-diphosphate to form N'-(5'-phosphoribosyl)-ATP (PR-ATP). Has a crucial role in the pathway because the rate of histidine biosynthesis seems to be controlled primarily by regulation of HisG enzymatic activity. In Halobacterium salinarum (strain ATCC 29341 / DSM 671 / R1), this protein is ATP phosphoribosyltransferase.